The following is a 143-amino-acid chain: Transcriptional regulator MraZ (143 aa).

2 SpoVT-AbrB domains span residues 5–47 (QYEH…SLEE) and 76–119 (AVEC…SKEV).

It belongs to the MraZ family. Forms oligomers.

It is found in the cytoplasm. The protein resides in the nucleoid. The sequence is that of Transcriptional regulator MraZ from Thermoanaerobacter pseudethanolicus (strain ATCC 33223 / 39E) (Clostridium thermohydrosulfuricum).